A 127-amino-acid chain; its full sequence is Glycine cleavage system H protein (127 aa).

The 82-residue stretch at 24–105 (TALVGITDFA…YGEGWMVKMK (82 aa)) folds into the Lipoyl-binding domain. K65 carries the post-translational modification N6-lipoyllysine.

Belongs to the GcvH family. In terms of assembly, the glycine cleavage system is composed of four proteins: P, T, L and H. (R)-lipoate serves as cofactor.

Functionally, the glycine cleavage system catalyzes the degradation of glycine. The H protein shuttles the methylamine group of glycine from the P protein to the T protein. The protein is Glycine cleavage system H protein of Chlorobium phaeovibrioides (strain DSM 265 / 1930) (Prosthecochloris vibrioformis (strain DSM 265)).